The following is a 397-amino-acid chain: Putative gustatory receptor 93c (397 aa).

Residues 1–12 (MIERLKKVSLPA) are Cytoplasmic-facing. The helical transmembrane segment at 13-33 (LSAFILFCSCHYGRILGVICF) threads the bilayer. The Extracellular segment spans residues 34–87 (DIGQRTSDDSLVVRNRHQFKWFCLSCRLISVTAVCCFCAPYVADIEDPYERLLQ). A helical transmembrane segment spans residues 88-108 (CFRLSASLICGICIIVVQVCY). Topologically, residues 109–141 (EKELLRMIISFLRLFRRVRRLSSLKRIGFGGKR) are cytoplasmic. The chain crosses the membrane as a helical span at residues 142 to 162 (EFFLLLFKFICLVYELYSEIC). The Extracellular segment spans residues 163–179 (QLWHLPDSLSLFATLCE). Residues 180–200 (IFLEIGSLMIIHIGFVGYLSV) form a helical membrane-spanning segment. Topologically, residues 201 to 266 (AALYSEVNSF…RTFHRLLELP (66 aa)) are cytoplasmic. A helical membrane pass occupies residues 267 to 287 (VLIILLGKIFATTILSYEVII). The Extracellular segment spans residues 288-295 (RPELYARK). A helical transmembrane segment spans residues 296-316 (IGMWGLVVKSFADVILLTLAV). The Cytoplasmic segment spans residues 317 to 371 (HEAVSSSRMMRRLSLENFPITDHKAWHMKWEMFLSRLNFFEFRVRPLGLFEVSNE). Residues 372–392 (VILLFLSSMITYFTYVVQYGI) traverse the membrane as a helical segment. Residues 393 to 397 (QTNRL) are Extracellular-facing.

Belongs to the insect chemoreceptor superfamily. Gustatory receptor (GR) family. Gr93a subfamily. As to expression, in larvae, is expressed in neurons of the posterior pharyngeal sense organ.

The protein resides in the cell membrane. Its function is as follows. Probable gustatory receptor which mediates acceptance or avoidance behavior, depending on its substrates. In Drosophila melanogaster (Fruit fly), this protein is Putative gustatory receptor 93c (Gr93c).